The primary structure comprises 423 residues: Serine--tRNA ligase (423 aa).

Residue T231–E233 coordinates L-serine. Residue R262–E264 participates in ATP binding. L-serine is bound at residue E285. Residue E349 to S352 participates in ATP binding. Residue S385 participates in L-serine binding.

It belongs to the class-II aminoacyl-tRNA synthetase family. Type-1 seryl-tRNA synthetase subfamily. Homodimer. The tRNA molecule binds across the dimer.

The protein resides in the cytoplasm. It carries out the reaction tRNA(Ser) + L-serine + ATP = L-seryl-tRNA(Ser) + AMP + diphosphate + H(+). It catalyses the reaction tRNA(Sec) + L-serine + ATP = L-seryl-tRNA(Sec) + AMP + diphosphate + H(+). It participates in aminoacyl-tRNA biosynthesis; selenocysteinyl-tRNA(Sec) biosynthesis; L-seryl-tRNA(Sec) from L-serine and tRNA(Sec): step 1/1. Functionally, catalyzes the attachment of serine to tRNA(Ser). Is also able to aminoacylate tRNA(Sec) with serine, to form the misacylated tRNA L-seryl-tRNA(Sec), which will be further converted into selenocysteinyl-tRNA(Sec). The chain is Serine--tRNA ligase from Coxiella burnetii (strain CbuG_Q212) (Coxiella burnetii (strain Q212)).